We begin with the raw amino-acid sequence, 1032 residues long: Y' element ATP-dependent helicase YPR204W (1032 aa).

Positions 1-175 (MADTPSVAVQ…LQRIGLTGLA (175 aa)) constitute a Helicase ATP-binding domain. 11–18 (APPGYGKT) serves as a coordination point for ATP. The short motif at 121-124 (DEFH) is the DEAH box element. Positions 232 to 381 (KLLLALFEIE…EFYGLESKKG (150 aa)) constitute a Helicase C-terminal domain. A compositionally biased stretch (low complexity) spans 455-634 (ANASTNATTN…ATTTESTNAS (180 aa)). The disordered stretch occupies residues 455-658 (ANASTNATTN…RFHPVTDINK (204 aa)). Positions 635–658 (AKEDANKDGNAEDNRFHPVTDINK) are enriched in basic and acidic residues.

Belongs to the helicase family. Yeast subtelomeric Y' repeat subfamily.

Catalyzes DNA unwinding and is involved in telomerase-independent telomere maintenance. In Saccharomyces cerevisiae (strain ATCC 204508 / S288c) (Baker's yeast), this protein is Y' element ATP-dependent helicase YPR204W.